Reading from the N-terminus, the 522-residue chain is Acetylcholine receptor subunit delta (522 aa).

Residues 1-21 (MGNIHFVYLLISCLYYSGCSG) form the signal peptide. Residues 22-245 (VNEEERLIND…VTFYLIIRRK (224 aa)) lie on the Extracellular side of the membrane. N91, N164, and N229 each carry an N-linked (GlcNAc...) asparagine glycan. Residues C151 and C165 are joined by a disulfide bond. 3 helical membrane passes run 246 to 270 (PLFY…AFYL), 278 to 295 (MSTA…LLLT), and 312 to 333 (YLMF…VLNF). Topologically, residues 334–476 (HFRTPSTHVL…WNLVGQTIDR (143 aa)) are cytoplasmic. Phosphotyrosine; by Tyr-kinases is present on Y393. Residues 477 to 497 (LSMFIITPVMVLGTIFIFVMG) traverse the membrane as a helical segment.

Belongs to the ligand-gated ion channel (TC 1.A.9) family. Acetylcholine receptor (TC 1.A.9.1) subfamily. Pentamer of two alpha chains, and one each of the beta, delta, and gamma chains.

The protein resides in the postsynaptic cell membrane. It is found in the cell membrane. It catalyses the reaction K(+)(in) = K(+)(out). It carries out the reaction Na(+)(in) = Na(+)(out). In terms of biological role, after binding acetylcholine, the AChR responds by an extensive change in conformation that affects all subunits and leads to opening of an ion-conducting channel across the plasma membrane. The protein is Acetylcholine receptor subunit delta (chrnd) of Tetronarce californica (Pacific electric ray).